The sequence spans 217 residues: Imidazole glycerol phosphate synthase subunit HisH (217 aa).

The region spanning 5-217 (RVGIINYGVG…LRLLANFLTL (213 aa)) is the Glutamine amidotransferase type-1 domain. Catalysis depends on C93, which acts as the Nucleophile. Residues H199 and E201 contribute to the active site.

Heterodimer of HisH and HisF.

It localises to the cytoplasm. The enzyme catalyses 5-[(5-phospho-1-deoxy-D-ribulos-1-ylimino)methylamino]-1-(5-phospho-beta-D-ribosyl)imidazole-4-carboxamide + L-glutamine = D-erythro-1-(imidazol-4-yl)glycerol 3-phosphate + 5-amino-1-(5-phospho-beta-D-ribosyl)imidazole-4-carboxamide + L-glutamate + H(+). It catalyses the reaction L-glutamine + H2O = L-glutamate + NH4(+). Its pathway is amino-acid biosynthesis; L-histidine biosynthesis; L-histidine from 5-phospho-alpha-D-ribose 1-diphosphate: step 5/9. Its function is as follows. IGPS catalyzes the conversion of PRFAR and glutamine to IGP, AICAR and glutamate. The HisH subunit catalyzes the hydrolysis of glutamine to glutamate and ammonia as part of the synthesis of IGP and AICAR. The resulting ammonia molecule is channeled to the active site of HisF. In Helicobacter hepaticus (strain ATCC 51449 / 3B1), this protein is Imidazole glycerol phosphate synthase subunit HisH.